Consider the following 633-residue polypeptide: MSADLSIGNEIKDSFKETHKWVQNNLKWLKDIEQFYRERAKLEKDYSERLSRLSAEYFNKKSSTSVPISVGDTPTTTPGSIEAAGVVAWNEILSQTDMISKDHDQLSTDFENHVANQLSGLFTKLDMTLSKINGFNNDMVNKKDNIYHELEKAKKDYDEACSTMEMARNRYTKASNDRNKKKLDEKEMEMNKCKNEYLIKINQANRTKDKYYFQDVPEVLDLLQDVNEAKTLFLNDLWLKAASVENDLGANVSKRLQAANSVVKQNKPSLNTAIFIKHNLKNWKEPQDFVYKPSPVWHDDEKFAVPSSLEVEDLRIKLAKAENDYNSLQDKTQNELSKLSTLNKIKHEMKTNEDNINATKFYDTLKEYLNVVSPFTSHETLKLQAEVQIESIQNNVPEEYDLSTDNIDLSKTKKKSGIFSKFKHNILNVDSKPSSGGSTGNGNGGPLHITSLFNTSRRTRLGSAPNNAGEDSDNNSIRTTSTNNTKKTTQNSSDDGKNKVLYAYVQKDDDEITITPGDKISLVARDTGSGWTKINNDTTGETGLVPTTYIRISSAATVKANDRGPAPEVPPPRRSTLPVRTMEAIYAYEAQGDDEISIDPGDIITVIRGDDGSGWTYGECDGLKGLFPTSYCK.

Positions 5 to 271 (LSIGNEIKDS…VVKQNKPSLN (267 aa)) constitute an F-BAR domain. Residues 138 to 210 (DMVNKKDNIY…INQANRTKDK (73 aa)) are a coiled coil. 4 positions are modified to phosphoserine: Ser327, Ser463, Ser472, and Ser476. The tract at residues 429 to 495 (VDSKPSSGGS…KKTTQNSSDD (67 aa)) is disordered. Low complexity predominate over residues 474-493 (NNSIRTTSTNNTKKTTQNSS). 2 SH3 domains span residues 493-555 (SDDG…ISSA) and 577-633 (LPVR…SYCK).

It belongs to the BZZ1 family. As to quaternary structure, interacts with LAS17 and MYO5.

The protein localises to the cytoplasm. It localises to the cytoskeleton. It is found in the actin patch. In terms of biological role, plays a role in endocytosis and trafficking to the vacuole. Functions with type I myosins to restore polarity of the actin cytoskeleton after NaCl stress. The polypeptide is Protein BZZ1 (BZZ1) (Saccharomyces cerevisiae (strain ATCC 204508 / S288c) (Baker's yeast)).